Here is a 204-residue protein sequence, read N- to C-terminus: Leucyl/phenylalanyl-tRNA--protein transferase (204 aa).

This sequence belongs to the L/F-transferase family.

It is found in the cytoplasm. The catalysed reaction is N-terminal L-lysyl-[protein] + L-leucyl-tRNA(Leu) = N-terminal L-leucyl-L-lysyl-[protein] + tRNA(Leu) + H(+). It carries out the reaction N-terminal L-arginyl-[protein] + L-leucyl-tRNA(Leu) = N-terminal L-leucyl-L-arginyl-[protein] + tRNA(Leu) + H(+). The enzyme catalyses L-phenylalanyl-tRNA(Phe) + an N-terminal L-alpha-aminoacyl-[protein] = an N-terminal L-phenylalanyl-L-alpha-aminoacyl-[protein] + tRNA(Phe). In terms of biological role, functions in the N-end rule pathway of protein degradation where it conjugates Leu, Phe and, less efficiently, Met from aminoacyl-tRNAs to the N-termini of proteins containing an N-terminal arginine or lysine. The chain is Leucyl/phenylalanyl-tRNA--protein transferase from Rhizobium etli (strain CIAT 652).